The primary structure comprises 278 residues: Ubiquinone biosynthesis protein COQ4, mitochondrial (278 aa).

Residues 1–28 (MATPTSVRIAGFRSLQALCAQRTVTRNF) constitute a mitochondrion transit peptide. Residues His164, Asp165, His168, and Glu180 each coordinate Zn(2+).

This sequence belongs to the COQ4 family. Component of a multi-subunit COQ enzyme complex, composed of at least COQ3, COQ4, COQ5, COQ6, COQ7 and COQ9. Zn(2+) serves as cofactor.

The protein localises to the mitochondrion inner membrane. The catalysed reaction is a 4-hydroxy-3-methoxy-5-(all-trans-polyprenyl)benzoate + H(+) = a 2-methoxy-6-(all-trans-polyprenyl)phenol + CO2. The protein operates within cofactor biosynthesis; ubiquinone biosynthesis. In terms of biological role, lyase that catalyzes the C1-decarboxylation of 4-hydroxy-3-methoxy-5-(all-trans-polyprenyl)benzoic acid into 2-methoxy-6-(all-trans-polyprenyl)phenol during ubiquinone biosynthesis. The polypeptide is Ubiquinone biosynthesis protein COQ4, mitochondrial (Uncinocarpus reesii (strain UAMH 1704)).